Here is a 275-residue protein sequence, read N- to C-terminus: Light-independent protochlorophyllide reductase iron-sulfur ATP-binding protein (275 aa).

Residues Gly-12–Thr-17 and Lys-41 each bind ATP. A Mg(2+)-binding site is contributed by Ser-16. [4Fe-4S] cluster contacts are provided by Cys-97 and Cys-131. Residue Asn-182–Arg-183 participates in ATP binding.

This sequence belongs to the NifH/BchL/ChlL family. As to quaternary structure, homodimer. Protochlorophyllide reductase is composed of three subunits; BchL, BchN and BchB. [4Fe-4S] cluster serves as cofactor.

It carries out the reaction chlorophyllide a + oxidized 2[4Fe-4S]-[ferredoxin] + 2 ADP + 2 phosphate = protochlorophyllide a + reduced 2[4Fe-4S]-[ferredoxin] + 2 ATP + 2 H2O. The protein operates within porphyrin-containing compound metabolism; bacteriochlorophyll biosynthesis (light-independent). Functionally, component of the dark-operative protochlorophyllide reductase (DPOR) that uses Mg-ATP and reduced ferredoxin to reduce ring D of protochlorophyllide (Pchlide) to form chlorophyllide a (Chlide). This reaction is light-independent. The L component serves as a unique electron donor to the NB-component of the complex, and binds Mg-ATP. In Chlorobium limicola (strain DSM 245 / NBRC 103803 / 6330), this protein is Light-independent protochlorophyllide reductase iron-sulfur ATP-binding protein.